The following is a 231-amino-acid chain: Lipoprotein-releasing system ATP-binding protein LolD (231 aa).

In terms of domain architecture, ABC transporter spans 11–231; the sequence is LQAEHLGKVY…HMENGRLQPD (221 aa). 47–54 provides a ligand contact to ATP; that stretch reads GASGSGKS.

The protein belongs to the ABC transporter superfamily. Lipoprotein translocase (TC 3.A.1.125) family. The complex is composed of two ATP-binding proteins (LolD) and two transmembrane proteins (LolC and LolE).

It localises to the cell inner membrane. In terms of biological role, part of the ABC transporter complex LolCDE involved in the translocation of mature outer membrane-directed lipoproteins, from the inner membrane to the periplasmic chaperone, LolA. Responsible for the formation of the LolA-lipoprotein complex in an ATP-dependent manner. The polypeptide is Lipoprotein-releasing system ATP-binding protein LolD (Bordetella bronchiseptica (strain ATCC BAA-588 / NCTC 13252 / RB50) (Alcaligenes bronchisepticus)).